Here is a 283-residue protein sequence, read N- to C-terminus: MEKISAFIITKNEAARIARAINSVKNIVDEVIVVDSESTDDTVAIAEQLGAKVIVKPWLGYVGQKSFAESLCVNDWILNIDADEELSKELQDEIEYIFASHNQDRYLAYQIKLLIMHRNDQKPRMFAPFNKCTRLYNKKFASFANTVNSTTHDSVVFNKDVDFAGKIYLLNEAAYHYSGTSIEQLVTKANFYSSEQAKDLVKQGKKLSNFRLTTEMIWWFFKAFFIRRYFVFGFDGFVDSMIFAFARFLRLAKLRESLLKSKNVIARSEATWQSRKNNKNSTN.

It belongs to the glycosyltransferase 2 family. WaaE/KdtX subfamily.

This is an uncharacterized protein from Rickettsia felis (strain ATCC VR-1525 / URRWXCal2) (Rickettsia azadi).